Reading from the N-terminus, the 117-residue chain is MRHRHGYRKLGRTSTHRAALLKNLTIAIIKAGKIETTLPKAKELRGYVERLITRARKGDFNAHRAVFASLQDKEATNKLVTEIAPKFADRNGGYTRIIKTRIRRGDAAEMAFIEFVA.

It belongs to the bacterial ribosomal protein bL17 family. Part of the 50S ribosomal subunit. Contacts protein L32.

The chain is Large ribosomal subunit protein bL17 from Campylobacter lari (strain RM2100 / D67 / ATCC BAA-1060).